Here is a 308-residue protein sequence, read N- to C-terminus: Aspartate carbamoyltransferase catalytic subunit (308 aa).

The carbamoyl phosphate site is built by Arg-51 and Thr-52. Lys-80 is an L-aspartate binding site. Residues Arg-101, His-129, and Gln-132 each contribute to the carbamoyl phosphate site. Residues Arg-162 and Arg-224 each coordinate L-aspartate. Positions 263 and 264 each coordinate carbamoyl phosphate.

This sequence belongs to the aspartate/ornithine carbamoyltransferase superfamily. ATCase family. Heterododecamer (2C3:3R2) of six catalytic PyrB chains organized as two trimers (C3), and six regulatory PyrI chains organized as three dimers (R2).

The catalysed reaction is carbamoyl phosphate + L-aspartate = N-carbamoyl-L-aspartate + phosphate + H(+). The protein operates within pyrimidine metabolism; UMP biosynthesis via de novo pathway; (S)-dihydroorotate from bicarbonate: step 2/3. Catalyzes the condensation of carbamoyl phosphate and aspartate to form carbamoyl aspartate and inorganic phosphate, the committed step in the de novo pyrimidine nucleotide biosynthesis pathway. This Bacteroides fragilis (strain ATCC 25285 / DSM 2151 / CCUG 4856 / JCM 11019 / LMG 10263 / NCTC 9343 / Onslow / VPI 2553 / EN-2) protein is Aspartate carbamoyltransferase catalytic subunit.